We begin with the raw amino-acid sequence, 76 residues long: RNA-binding protein KhpA (76 aa).

One can recognise a KH domain in the interval 29 to 76; the sequence is SLHIELSVHPDDMGKVIGKQGRTAKALRSVVYAAATKQKRRVRLDIID.

It belongs to the KhpA RNA-binding protein family. As to quaternary structure, forms a complex with KhpB.

The protein localises to the cytoplasm. Its function is as follows. A probable RNA chaperone. Forms a complex with KhpB which binds to cellular RNA and controls its expression. Plays a role in peptidoglycan (PG) homeostasis and cell length regulation. This is RNA-binding protein KhpA from Halalkalibacterium halodurans (strain ATCC BAA-125 / DSM 18197 / FERM 7344 / JCM 9153 / C-125) (Bacillus halodurans).